We begin with the raw amino-acid sequence, 311 residues long: Bifunctional protein FolD (311 aa).

An NADP(+)-binding site is contributed by 174–176 (GKG).

It belongs to the tetrahydrofolate dehydrogenase/cyclohydrolase family. As to quaternary structure, homodimer.

It catalyses the reaction (6R)-5,10-methylene-5,6,7,8-tetrahydrofolate + NADP(+) = (6R)-5,10-methenyltetrahydrofolate + NADPH. The catalysed reaction is (6R)-5,10-methenyltetrahydrofolate + H2O = (6R)-10-formyltetrahydrofolate + H(+). It functions in the pathway one-carbon metabolism; tetrahydrofolate interconversion. Functionally, catalyzes the oxidation of 5,10-methylenetetrahydrofolate to 5,10-methenyltetrahydrofolate and then the hydrolysis of 5,10-methenyltetrahydrofolate to 10-formyltetrahydrofolate. This chain is Bifunctional protein FolD, found in Pyrobaculum islandicum (strain DSM 4184 / JCM 9189 / GEO3).